We begin with the raw amino-acid sequence, 198 residues long: B9 domain-containing protein 1 (198 aa).

In terms of domain architecture, C2 B9-type spans 8-126; it reads FLLNVSGQIE…TIPMFVPESS (119 aa).

It belongs to the B9D family. In terms of assembly, part of the tectonic-like complex (also named B9 complex).

The protein resides in the cytoplasm. The protein localises to the cytoskeleton. It localises to the cilium basal body. In terms of biological role, component of the tectonic-like complex, a complex localized at the transition zone of primary cilia and acting as a barrier that prevents diffusion of transmembrane proteins between the cilia and plasma membranes. Required for ciliogenesis and sonic hedgehog/SHH signaling. The chain is B9 domain-containing protein 1 (b9d1) from Xenopus laevis (African clawed frog).